Reading from the N-terminus, the 339-residue chain is Glycerol-3-phosphate dehydrogenase [NAD(P)+] (339 aa).

NADPH is bound by residues serine 11, tryptophan 12, and lysine 109. Sn-glycerol 3-phosphate is bound by residues lysine 109, glycine 140, and serine 142. Alanine 144 lines the NADPH pocket. Residues lysine 195, aspartate 249, serine 259, arginine 260, and asparagine 261 each contribute to the sn-glycerol 3-phosphate site. Lysine 195 acts as the Proton acceptor in catalysis. Arginine 260 serves as a coordination point for NADPH. The NADPH site is built by valine 284 and glutamate 286.

It belongs to the NAD-dependent glycerol-3-phosphate dehydrogenase family.

The protein localises to the cytoplasm. The catalysed reaction is sn-glycerol 3-phosphate + NAD(+) = dihydroxyacetone phosphate + NADH + H(+). It carries out the reaction sn-glycerol 3-phosphate + NADP(+) = dihydroxyacetone phosphate + NADPH + H(+). It functions in the pathway membrane lipid metabolism; glycerophospholipid metabolism. In terms of biological role, catalyzes the reduction of the glycolytic intermediate dihydroxyacetone phosphate (DHAP) to sn-glycerol 3-phosphate (G3P), the key precursor for phospholipid synthesis. The chain is Glycerol-3-phosphate dehydrogenase [NAD(P)+] from Lactobacillus johnsonii (strain CNCM I-12250 / La1 / NCC 533).